We begin with the raw amino-acid sequence, 357 residues long: Probable nitronate monooxygenase (357 aa).

FMN-binding positions include asparagine 71, glutamine 175, glycine 180, glycine 219, and 238-241 (QMGT).

It belongs to the nitronate monooxygenase family. NMO class I subfamily. FMN serves as cofactor.

It carries out the reaction 3 propionate 3-nitronate + 3 O2 + H2O = 3 3-oxopropanoate + 2 nitrate + nitrite + H2O2 + 3 H(+). Nitronate monooxygenase that uses molecular oxygen to catalyze the oxidative denitrification of alkyl nitronates. Acts on propionate 3-nitronate (P3N), the presumed physiological substrate. Probably functions in the detoxification of P3N, a metabolic poison produced by plants and fungi as a defense mechanism. The sequence is that of Probable nitronate monooxygenase from Staphylococcus haemolyticus (strain JCSC1435).